We begin with the raw amino-acid sequence, 1021 residues long: DNA-directed RNA polymerase 2B, chloroplastic/mitochondrial (1021 aa).

The tract at residues 315–337 (KKQKAEKDKQKEDGEHVTQEQEK) is disordered. Residues Asp722, Lys797, and Asp954 contribute to the active site.

The protein belongs to the phage and mitochondrial RNA polymerase family.

It is found in the plastid. Its subcellular location is the chloroplast. It localises to the mitochondrion. The enzyme catalyses RNA(n) + a ribonucleoside 5'-triphosphate = RNA(n+1) + diphosphate. Functionally, DNA-dependent RNA polymerase catalyzes the transcription of DNA into RNA using the four ribonucleoside triphosphates as substrates. This Nicotiana tabacum (Common tobacco) protein is DNA-directed RNA polymerase 2B, chloroplastic/mitochondrial (RPOT2-TOM).